We begin with the raw amino-acid sequence, 543 residues long: MTRYIFVTGGVVSSLGKGIASASLAAILEARGLKVTMLKLDPYINVDPGTMSPFQHGEVFVTHDGAETDLDLGHYERFIRTRMTQNNNFTTGRVYEDVLRRERRGDYLGATIQVIPHITDEIKRRIIKGAGDADVALVEVGGTVGDIESQPFLEAIRQLRVEVGAKRAMLMHLTLVPYIATAGETKTKPTQHSVKELRSIGLQPDVLVCRSDRAIDVSSRRKIALFTNVEERAVISLPDADTIYKIPGILHAQGLDDYVVERFGLECRGADLSEWDRVVDAKLHPEKEVNIAMVGKYMELLDAYKSLIEAMSHAGIQSRTKVNLRYIDSEDIENQGTGLLEGVDAILVPGGFGLRGVEGKIATVRYARENKIPYLGICLGMQVAVIEFARDVLGWSDANSTEFDKDSGHPVVGLITEWADASGNTEVRTEASDLGGTMRLGAQECGLEPGSKVFECYGKERIVERHRHRYEVNNNLLPQLQAAGLKITGRSGDGALVEVVEAPDHPWFVACQFHPEFTSTPRDGHPLFSGFVNAALEYKAKKA.

The segment at 1–265 is amidoligase domain; that stretch reads MTRYIFVTGG…DDYVVERFGL (265 aa). Position 13 (Ser13) interacts with CTP. Ser13 contributes to the UTP binding site. ATP contacts are provided by residues 14–19 and Asp71; that span reads SLGKGI. Mg(2+) contacts are provided by Asp71 and Glu139. Residues 146–148, 186–191, and Lys222 contribute to the CTP site; these read DIE and KTKPTQ. Residues 186-191 and Lys222 contribute to the UTP site; that span reads KTKPTQ. Positions 290-541 constitute a Glutamine amidotransferase type-1 domain; sequence NIAMVGKYME…VNAALEYKAK (252 aa). Gly351 serves as a coordination point for L-glutamine. The active-site Nucleophile; for glutamine hydrolysis is the Cys378. Residues 379 to 382, Glu402, and Arg469 contribute to the L-glutamine site; that span reads LGMQ. Residues His514 and Glu516 contribute to the active site.

Belongs to the CTP synthase family. Homotetramer.

It catalyses the reaction UTP + L-glutamine + ATP + H2O = CTP + L-glutamate + ADP + phosphate + 2 H(+). It carries out the reaction L-glutamine + H2O = L-glutamate + NH4(+). The enzyme catalyses UTP + NH4(+) + ATP = CTP + ADP + phosphate + 2 H(+). Its pathway is pyrimidine metabolism; CTP biosynthesis via de novo pathway; CTP from UDP: step 2/2. Its activity is regulated as follows. Allosterically activated by GTP, when glutamine is the substrate; GTP has no effect on the reaction when ammonia is the substrate. The allosteric effector GTP functions by stabilizing the protein conformation that binds the tetrahedral intermediate(s) formed during glutamine hydrolysis. Inhibited by the product CTP, via allosteric rather than competitive inhibition. Its function is as follows. Catalyzes the ATP-dependent amination of UTP to CTP with either L-glutamine or ammonia as the source of nitrogen. Regulates intracellular CTP levels through interactions with the four ribonucleotide triphosphates. The polypeptide is CTP synthase (Stutzerimonas stutzeri (strain A1501) (Pseudomonas stutzeri)).